A 327-amino-acid polypeptide reads, in one-letter code: Serine/threonine-protein phosphatase PP1-beta catalytic subunit (327 aa).

A2 is modified (N-acetylalanine). The Mn(2+) site is built by D63, H65, D91, and N123. Residue H124 is the Proton donor of the active site. H172 and H247 together coordinate Mn(2+). Residues 305–327 form a disordered region; it reads QYGGLNSGRPVTPPRTANPPKKR.

It belongs to the PPP phosphatase family. PP-1 subfamily. Requires Mn(2+) as cofactor.

It is found in the cytoplasm. The protein localises to the nucleus. The enzyme catalyses O-phospho-L-seryl-[protein] + H2O = L-seryl-[protein] + phosphate. It catalyses the reaction O-phospho-L-threonyl-[protein] + H2O = L-threonyl-[protein] + phosphate. Functionally, protein phosphatase that associates with over 200 regulatory proteins to form highly specific holoenzymes which dephosphorylate hundreds of biological targets. Protein phosphatase (PP1) is essential for cell division, it participates in the regulation of glycogen metabolism, muscle contractility and protein synthesis. Involved in regulation of ionic conductances and long-term synaptic plasticity. The polypeptide is Serine/threonine-protein phosphatase PP1-beta catalytic subunit (ppp1cb) (Xenopus laevis (African clawed frog)).